The sequence spans 245 residues: PF03932 family protein CutC (245 aa).

The protein belongs to the CutC family.

The protein resides in the cytoplasm. The chain is PF03932 family protein CutC from Photobacterium profundum (strain SS9).